We begin with the raw amino-acid sequence, 393 residues long: Seven-bladed beta-propeller protein Rv1057 (393 aa).

Residues 208 to 230 form a disordered region; that stretch reads DGGRIGSRSRSRQKSSKPRGNQA. Over residues 214-224 the composition is skewed to basic residues; it reads SRSRSRQKSSK.

Functionally, may play an important role in host-pathogen interactions and in ESAT-6 secretion. In Mycobacterium tuberculosis (strain ATCC 25618 / H37Rv), this protein is Seven-bladed beta-propeller protein Rv1057.